Reading from the N-terminus, the 128-residue chain is S-adenosylmethionine decarboxylase proenzyme (128 aa).

The active-site Schiff-base intermediate with substrate; via pyruvic acid is the Ser-63. Ser-63 is modified (pyruvic acid (Ser); by autocatalysis). Residue His-68 is the Proton acceptor; for processing activity of the active site. Catalysis depends on Cys-83, which acts as the Proton donor; for catalytic activity.

Belongs to the prokaryotic AdoMetDC family. Type 1 subfamily. As to quaternary structure, heterotetramer of two alpha and two beta chains arranged as a dimer of alpha/beta heterodimers. The cofactor is pyruvate. Is synthesized initially as an inactive proenzyme. Formation of the active enzyme involves a self-maturation process in which the active site pyruvoyl group is generated from an internal serine residue via an autocatalytic post-translational modification. Two non-identical subunits are generated from the proenzyme in this reaction, and the pyruvate is formed at the N-terminus of the alpha chain, which is derived from the carboxyl end of the proenzyme. The post-translation cleavage follows an unusual pathway, termed non-hydrolytic serinolysis, in which the side chain hydroxyl group of the serine supplies its oxygen atom to form the C-terminus of the beta chain, while the remainder of the serine residue undergoes an oxidative deamination to produce ammonia and the pyruvoyl group blocking the N-terminus of the alpha chain.

The catalysed reaction is S-adenosyl-L-methionine + H(+) = S-adenosyl 3-(methylsulfanyl)propylamine + CO2. Its pathway is amine and polyamine biosynthesis; S-adenosylmethioninamine biosynthesis; S-adenosylmethioninamine from S-adenosyl-L-methionine: step 1/1. In terms of biological role, catalyzes the decarboxylation of S-adenosylmethionine to S-adenosylmethioninamine (dcAdoMet), the propylamine donor required for the synthesis of the polyamines spermine and spermidine from the diamine putrescine. This chain is S-adenosylmethionine decarboxylase proenzyme, found in Leptospira borgpetersenii serovar Hardjo-bovis (strain JB197).